The sequence spans 245 residues: Probable inactive carboxylesterase Os04g0669700 (245 aa).

Active-site charge relay system residues include S115 and H201.

Belongs to the AB hydrolase superfamily. AB hydrolase 2 family.

The sequence is that of Probable inactive carboxylesterase Os04g0669700 from Oryza sativa subsp. japonica (Rice).